We begin with the raw amino-acid sequence, 146 residues long: Cytochrome c oxidase subunit 5A, mitochondrial (146 aa).

A mitochondrion-targeting transit peptide spans M1 to Y37. The SIFI-degron motif lies at L2–R16. Residues K83 and K109 each carry the N6-acetyllysine modification. At T137 the chain carries Phosphothreonine.

It belongs to the cytochrome c oxidase subunit 5A family. Component of the cytochrome c oxidase (complex IV, CIV), a multisubunit enzyme composed of 14 subunits. The complex is composed of a catalytic core of 3 subunits MT-CO1, MT-CO2 and MT-CO3, encoded in the mitochondrial DNA, and 11 supernumerary subunits COX4I, COX5A, COX5B, COX6A, COX6B, COX6C, COX7A, COX7B, COX7C, COX8 and NDUFA4, which are encoded in the nuclear genome. The complex exists as a monomer or a dimer and forms supercomplexes (SCs) in the inner mitochondrial membrane with NADH-ubiquinone oxidoreductase (complex I, CI) and ubiquinol-cytochrome c oxidoreductase (cytochrome b-c1 complex, complex III, CIII), resulting in different assemblies (supercomplex SCI(1)III(2)IV(1) and megacomplex MCI(2)III(2)IV(2)). Interacts with AFG1L. Interacts with RAB5IF. In terms of processing, in response to mitochondrial stress, the precursor protein is ubiquitinated by the SIFI complex in the cytoplasm before mitochondrial import, leading to its degradation. Within the SIFI complex, UBR4 initiates ubiquitin chain that are further elongated or branched by KCMF1.

Its subcellular location is the mitochondrion inner membrane. It functions in the pathway energy metabolism; oxidative phosphorylation. Component of the cytochrome c oxidase, the last enzyme in the mitochondrial electron transport chain which drives oxidative phosphorylation. The respiratory chain contains 3 multisubunit complexes succinate dehydrogenase (complex II, CII), ubiquinol-cytochrome c oxidoreductase (cytochrome b-c1 complex, complex III, CIII) and cytochrome c oxidase (complex IV, CIV), that cooperate to transfer electrons derived from NADH and succinate to molecular oxygen, creating an electrochemical gradient over the inner membrane that drives transmembrane transport and the ATP synthase. Cytochrome c oxidase is the component of the respiratory chain that catalyzes the reduction of oxygen to water. Electrons originating from reduced cytochrome c in the intermembrane space (IMS) are transferred via the dinuclear copper A center (CU(A)) of subunit 2 and heme A of subunit 1 to the active site in subunit 1, a binuclear center (BNC) formed by heme A3 and copper B (CU(B)). The BNC reduces molecular oxygen to 2 water molecules using 4 electrons from cytochrome c in the IMS and 4 protons from the mitochondrial matrix. This chain is Cytochrome c oxidase subunit 5A, mitochondrial (Cox5a), found in Mus musculus (Mouse).